A 241-amino-acid polypeptide reads, in one-letter code: Outer membrane protein assembly factor BamD (241 aa).

The N-terminal stretch at 1–17 (MKYQTLSGLLALSLLFG) is a signal peptide. Cys-18 is lipidated: N-palmitoyl cysteine. Cys-18 carries the S-diacylglycerol cysteine lipid modification.

Belongs to the BamD family. In terms of assembly, part of the Bam complex.

It is found in the cell outer membrane. Its function is as follows. Part of the outer membrane protein assembly complex, which is involved in assembly and insertion of beta-barrel proteins into the outer membrane. This Vibrio cholerae serotype O1 (strain ATCC 39315 / El Tor Inaba N16961) protein is Outer membrane protein assembly factor BamD.